We begin with the raw amino-acid sequence, 214 residues long: Ribosomal RNA small subunit methyltransferase G (214 aa).

S-adenosyl-L-methionine contacts are provided by residues glycine 81, methionine 86, 132 to 133, and arginine 147; that span reads VE.

This sequence belongs to the methyltransferase superfamily. RNA methyltransferase RsmG family.

It localises to the cytoplasm. It catalyses the reaction guanosine(527) in 16S rRNA + S-adenosyl-L-methionine = N(7)-methylguanosine(527) in 16S rRNA + S-adenosyl-L-homocysteine. Functionally, specifically methylates the N7 position of guanine in position 527 of 16S rRNA. This chain is Ribosomal RNA small subunit methyltransferase G, found in Pseudomonas paraeruginosa (strain DSM 24068 / PA7) (Pseudomonas aeruginosa (strain PA7)).